Here is a 206-residue protein sequence, read N- to C-terminus: 2,3-bisphosphoglycerate-dependent phosphoglycerate mutase (206 aa).

Residues 9 to 16 (RHGQSEWN), 22 to 23 (TG), arginine 61, 88 to 91 (ERDY), lysine 99, 115 to 116 (RR), and 159 to 160 (GN) contribute to the substrate site. The active-site Tele-phosphohistidine intermediate is the histidine 10. Glutamate 88 acts as the Proton donor/acceptor in catalysis.

It belongs to the phosphoglycerate mutase family. BPG-dependent PGAM subfamily. In terms of assembly, homodimer.

It catalyses the reaction (2R)-2-phosphoglycerate = (2R)-3-phosphoglycerate. Its pathway is carbohydrate degradation; glycolysis; pyruvate from D-glyceraldehyde 3-phosphate: step 3/5. Catalyzes the interconversion of 2-phosphoglycerate and 3-phosphoglycerate. This is 2,3-bisphosphoglycerate-dependent phosphoglycerate mutase from Brucella ovis (strain ATCC 25840 / 63/290 / NCTC 10512).